Here is a 922-residue protein sequence, read N- to C-terminus: MSQFKRQRINPLPGGRNFSGAASTSLLGPPPGLLTPPVATDLSQNARHLQSGEKQRVFTGIVTSLHDYFGVVDEEVFFQLSVVKGRLPQLGEKVLVKAAYNPGQAVPWNAVKVQTLSNQPLLKSPAPPLLHVAALGQKQGILGAQPQLIFQPHRIPPLFPQKPLSLFQTSHTLHLSHLNRFPARGPHGRLDQGRSDDYDSKKRKQRAGGEPWGAKKPRHDLSPYRVHLTPYTVDSPTCDFLELQRRYRSLLVPSDFLSVHLSWLSAFPLGQPFSLHHPSRIQVSSEKEAAPDTGAEPSPEDSDPTYSSKVLLLSSPGLEEFYRCCMLFVDDMAEPRETPEHPLKQLKFLLGRKEEEAVLVGGEWSPSLDGLDPQADPQVLVRTAIRCAQAQTGIDLSTCTKWWRFAEFQYLQPGPPRQLHTVVVYLPDVWTIMPTLEEWEALCQQKATEAAPQPHEASGEAEATEQAPDVSEQADTSKQNTETMEATTQQDVDTDLPEAPPPPLEPAVMARPRCVNLSLYGIVEDRRPKERISFEVVVLAELFVEMLQRDFGYRIYKTLLSLPEKVVSPPEPEKEEAAKEDAVKEEEAVKEEAVKVSKDEVQNEGTAAESDSPLKEDGLLPKRPSSGGEEEEKARGEAAEDLCEMALDPDLLLLRDDGEDEFAGAKLEETEVRSVASNQSEMEYSSLQDMPKELDPSTVLPLDCLLAFVFFDANWCGYLHRRDLERVLLTLGIRLSAEQAKQLVSRVVAQNICQYRSLQYSRAEVLDDGLPEDVLFGNLDLLPPSGKSTKPGAAPTEHKGLVPHNGSLINVGSLLQRAEQQDSGRLYLENKIHTLELKLEESHNRFSATEVTNKTLAAEMQELRARLAEAEETARTAERQKNQLQRQMQDFRRRLTPLHLEMQRIVEKADSWVEKEEPTPSN.

Positions 1 to 39 are disordered; that stretch reads MSQFKRQRINPLPGGRNFSGAASTSLLGPPPGLLTPPVA. T35 is subject to Phosphothreonine. N6-acetyllysine; by KAT8 is present on K112. K123 bears the N6-methyllysine mark. Position 124 is a phosphoserine (S124). Disordered stretches follow at residues 178–219, 280–307, 446–508, and 567–638; these read LNRF…KPRH, RIQV…PTYS, KATE…EPAV, and VSPP…RGEA. At R180 the chain carries Omega-N-methylarginine. Over residues 188-200 the composition is skewed to basic and acidic residues; that stretch reads GRLDQGRSDDYDS. K215 carries the post-translational modification N6-acetyllysine; by KAT8. The segment covering 473–491 has biased composition (polar residues); that stretch reads QADTSKQNTETMEATTQQD. Residue T483 is modified to Phosphothreonine. A Phosphoserine modification is found at S568. A compositionally biased stretch (basic and acidic residues) spans 571-601; the sequence is EPEKEEAAKEDAVKEEEAVKEEAVKVSKDEV. Positions 573-596 form a coiled coil; the sequence is EKEEAAKEDAVKEEEAVKEEAVKV. A Glycyl lysine isopeptide (Lys-Gly) (interchain with G-Cter in SUMO2 and SUMO3); alternate cross-link involves residue K590. A Glycyl lysine isopeptide (Lys-Gly) (interchain with G-Cter in SUMO2); alternate cross-link involves residue K590. The tract at residues 609–669 is interaction with MCC; the sequence is ESDSPLKEDG…DEFAGAKLEE (61 aa). Phosphoserine occurs at positions 612, 626, 674, 677, and 680. Y684 bears the Phosphotyrosine mark. S686 and S807 each carry phosphoserine. The interaction with NR1D1 stretch occupies residues 703-922; it reads DCLLAFVFFD…VEKEEPTPSN (220 aa). Residues 828–898 adopt a coiled-coil conformation; it reads LENKIHTLEL…QDFRRRLTPL (71 aa). T896 is subject to Phosphothreonine.

As to quaternary structure, component of the DBIRD complex. Interacts with ZNF326/ZIRD; the interaction is direct. Interacts (via N-terminus) with SIRT1, which inhibits the deacetylation of substrates. Interacts (via N-terminus) with SUV39H1; this interaction abolishes the interaction with SIRT1. Component of a nuclear receptor-mediated transcription complex composed of at least ZNF335, CCAR2 and EMSY; the complex stimulates the transcription of nuclear receptor target genes such as SOX9 and HOXA1. Within the complex interacts with EMSY and interacts with ZNF335 (via C-terminus). Components of this complex may associate with components of a histone methylation complex to form a complex at least composed of ZNF335, HCFC1, CCAR2, EMSY, MKI67, RBBP5, ASH2L and WDR5. Within this complex, interacts with ASH2L. Interacts with NR1D1. Interacts (via N-terminus) with ESR1 and ESR2. Interacts (via N-terminus) with HDAC3 (via C-terminus). Interacts with HDAC1 and MED2F. Interacts with MCC. Interacts (via N-terminus) with NR1H2 and NR1H3 in a ligand-independent manner. Interacts with CSNK2A1. Interacts (via N-terminus) with p53/TP53. Interacts (via N-terminus) with BRCA1 (via the BRCT domains). Interacts (via N-terminus) with CHEK2 (via protein kinase domain). Interacts with PSEM3. Interacts (via N-terminus) with PSIA3 and SENP1. The sumoylated form shows a preferential interaction with SIRT1 as compared to its unmodified form. Interacts with CECR2; may form part of the CERF-1 and/or CEF-5 ISWI chromatin remodeling complexes in embryonic stem cells. Post-translationally, acetylation at Lys-112 and Lys-215 by KAT8 prevents inhibitory binding to SIRT1 and increases its deacetylase activity. Genotoxic stress induces its sumoylation and sumoylation promotes the SIRT1-CCAR2 interaction which in turn inhibits SIRT1-mediated deacetylation of p53/TP53. Sumoylation leads to transcriptional activation of p53/TP53 by sequestering SIRT1 from p53/TP53. Desumoylated by SENP1.

Its subcellular location is the nucleus. The protein localises to the cytoplasm. It is found in the cytoskeleton. It localises to the spindle. In terms of biological role, core component of the DBIRD complex, a multiprotein complex that acts at the interface between core mRNP particles and RNA polymerase II (RNAPII) and integrates transcript elongation with the regulation of alternative splicing: the DBIRD complex affects local transcript elongation rates and alternative splicing of a large set of exons embedded in (A + T)-rich DNA regions. Inhibits SIRT1 deacetylase activity leading to increasing levels of p53/TP53 acetylation and p53-mediated apoptosis. Inhibits SUV39H1 methyltransferase activity. Mediates ligand-dependent transcriptional activation by nuclear hormone receptors. Plays a critical role in maintaining genomic stability and cellular integrity following UV-induced genotoxic stress. Regulates the circadian expression of the core clock components NR1D1 and BMAL1. Enhances the transcriptional repressor activity of NR1D1 through stabilization of NR1D1 protein levels by preventing its ubiquitination and subsequent degradation. Represses the ligand-dependent transcriptional activation function of ESR2. Acts as a regulator of PCK1 expression and gluconeogenesis by a mechanism that involves, at least in part, both NR1D1 and SIRT1. Negatively regulates the deacetylase activity of HDAC3 and can alter its subcellular localization. Positively regulates the beta-catenin pathway (canonical Wnt signaling pathway) and is required for MCC-mediated repression of the beta-catenin pathway. Represses ligand-dependent transcriptional activation function of NR1H2 and NR1H3 and inhibits the interaction of SIRT1 with NR1H3. Plays an important role in tumor suppression through p53/TP53 regulation; stabilizes p53/TP53 by affecting its interaction with ubiquitin ligase MDM2. Represses the transcriptional activator activity of BRCA1. Inhibits SIRT1 in a CHEK2 and PSEM3-dependent manner and inhibits the activity of CHEK2 in vitro. This is Cell cycle and apoptosis regulator protein 2 (Ccar2) from Mus musculus (Mouse).